The following is a 153-amino-acid chain: Transcription antitermination protein NusB (153 aa).

The protein belongs to the NusB family.

In terms of biological role, involved in transcription antitermination. Required for transcription of ribosomal RNA (rRNA) genes. Binds specifically to the boxA antiterminator sequence of the ribosomal RNA (rrn) operons. The chain is Transcription antitermination protein NusB from Nitratidesulfovibrio vulgaris (strain ATCC 29579 / DSM 644 / CCUG 34227 / NCIMB 8303 / VKM B-1760 / Hildenborough) (Desulfovibrio vulgaris).